A 337-amino-acid polypeptide reads, in one-letter code: Glyceraldehyde-3-phosphate dehydrogenase (337 aa).

NAD(+) contacts are provided by residues 12–13 (RI), aspartate 34, and lysine 79. D-glyceraldehyde 3-phosphate contacts are provided by residues 150-152 (SCT), threonine 181, 210-211 (TG), and arginine 233. Residue cysteine 151 is the Nucleophile of the active site. Asparagine 315 is a binding site for NAD(+).

This sequence belongs to the glyceraldehyde-3-phosphate dehydrogenase family. Homotetramer.

It localises to the cytoplasm. It catalyses the reaction D-glyceraldehyde 3-phosphate + phosphate + NAD(+) = (2R)-3-phospho-glyceroyl phosphate + NADH + H(+). It functions in the pathway carbohydrate degradation; glycolysis; pyruvate from D-glyceraldehyde 3-phosphate: step 1/5. The protein is Glyceraldehyde-3-phosphate dehydrogenase (GPD) of Schizophyllum commune (Split gill fungus).